The primary structure comprises 124 residues: Aspartate 1-decarboxylase (124 aa).

S25 (schiff-base intermediate with substrate; via pyruvic acid) is an active-site residue. At S25 the chain carries Pyruvic acid (Ser). Residue T57 participates in substrate binding. The active-site Proton donor is Y58. 71–73 (GAA) serves as a coordination point for substrate.

The protein belongs to the PanD family. In terms of assembly, heterooctamer of four alpha and four beta subunits. Pyruvate serves as cofactor. In terms of processing, is synthesized initially as an inactive proenzyme, which is activated by self-cleavage at a specific serine bond to produce a beta-subunit with a hydroxyl group at its C-terminus and an alpha-subunit with a pyruvoyl group at its N-terminus.

It localises to the cytoplasm. The catalysed reaction is L-aspartate + H(+) = beta-alanine + CO2. It participates in cofactor biosynthesis; (R)-pantothenate biosynthesis; beta-alanine from L-aspartate: step 1/1. Its function is as follows. Catalyzes the pyruvoyl-dependent decarboxylation of aspartate to produce beta-alanine. The sequence is that of Aspartate 1-decarboxylase from Bdellovibrio bacteriovorus (strain ATCC 15356 / DSM 50701 / NCIMB 9529 / HD100).